A 759-amino-acid polypeptide reads, in one-letter code: DNA topoisomerase 3 (759 aa).

Positions 3–147 (RALFVAEKND…RLDIFRARFS (145 aa)) constitute a Toprim domain. Residues 165-590 (DEKTVAAVDC…EQIGKYRAIF (426 aa)) enclose the Topo IA-type catalytic domain. Tyr-334 acts as the O-(5'-phospho-DNA)-tyrosine intermediate in catalysis. Positions 609-715 (DKNNQAGGGP…KEQEEEEEVF (107 aa)) are disordered. The span at 614–639 (AGGGPGGPGGGGGPPRGPGGGGGGGP) shows a compositional bias: gly residues. Residues 640 to 649 (TGPPAPPKPP) are compositionally biased toward pro residues. The Zn(2+) site is built by Cys-716, Cys-718, Cys-743, and Cys-753. Residues 716-759 (CQCPEPMRAVTKVVQKEGPNKGKKFYTCSLPYTSSEKCNFFKWA) form a GRF-type zinc finger.

This sequence belongs to the type IA topoisomerase family. Component of the BTR double Holliday Junction dissolution complex composed of at least him-6, top-3, rmh-1 and rmif-2, which is involved in double strand break repair in the germline. May interact with rmh-1.

The protein resides in the nucleus. It carries out the reaction ATP-independent breakage of single-stranded DNA, followed by passage and rejoining.. Component of the BTR double Holliday Junction dissolution complex, which is involved in homologous recombination during meiotic double strand break in the germline. Releases the supercoiling and torsional tension of DNA introduced during the DNA replication and transcription by transiently cleaving and rejoining one strand of the DNA duplex. Introduces a single-strand break via transesterification at a target site in duplex DNA. The scissile phosphodiester is attacked by the catalytic tyrosine of the enzyme, resulting in the formation of a DNA-(5'-phosphotyrosyl)-enzyme intermediate and the expulsion of a 3'-OH DNA strand. The free DNA strand than undergoes passage around the unbroken strand thus removing DNA supercoils. Finally, in the religation step, the DNA 3'-OH attacks the covalent intermediate to expel the active-site tyrosine and restore the DNA phosphodiester backbone. The protein is DNA topoisomerase 3 of Caenorhabditis elegans.